The primary structure comprises 660 residues: Acetyl-coenzyme A synthetase (660 aa).

CoA-binding positions include 197–200 (RGGK) and T317. ATP-binding positions include 397-399 (GEP), 421-426 (DTFWQT), D512, and R528. S536 is a binding site for CoA. R539 serves as a coordination point for ATP. Residues V550 and V555 each coordinate Mg(2+). K625 is subject to N6-acetyllysine.

The protein belongs to the ATP-dependent AMP-binding enzyme family. The cofactor is Mg(2+). Post-translationally, acetylated. Deacetylation by the SIR2-homolog deacetylase activates the enzyme.

It carries out the reaction acetate + ATP + CoA = acetyl-CoA + AMP + diphosphate. In terms of biological role, catalyzes the conversion of acetate into acetyl-CoA (AcCoA), an essential intermediate at the junction of anabolic and catabolic pathways. AcsA undergoes a two-step reaction. In the first half reaction, AcsA combines acetate with ATP to form acetyl-adenylate (AcAMP) intermediate. In the second half reaction, it can then transfer the acetyl group from AcAMP to the sulfhydryl group of CoA, forming the product AcCoA. In Cupriavidus metallidurans (strain ATCC 43123 / DSM 2839 / NBRC 102507 / CH34) (Ralstonia metallidurans), this protein is Acetyl-coenzyme A synthetase.